Consider the following 83-residue polypeptide: High-potential iron-sulfur protein (83 aa).

Residues Cys-43, Cys-46, Cys-61, and Cys-75 each coordinate [4Fe-4S] cluster.

The protein belongs to the high-potential iron-sulfur protein (HiPIP) family. As to quaternary structure, homodimer.

Functionally, specific class of high-redox-potential 4Fe-4S ferredoxins. Functions in anaerobic electron transport in most purple and in some other photosynthetic bacteria and in at least one genus (Paracoccus) of halophilic, denitrifying bacteria. The sequence is that of High-potential iron-sulfur protein (hip) from Thermochromatium tepidum (Chromatium tepidum).